Consider the following 422-residue polypeptide: MANGTRQKDLRERAERVIPGGMYGHESTRLLPPEFPQFFRRALGARIWDADEQPYIDYMCAYGPNLLGYRQSEIEAAADAQRLLGDTMTGPSEIMVNLAEAFVGMVRHADWAMFCKNGSDATSTAMVLARAHTGRKTILCAKGAYHGASPWNTPHTAGILASDRVHVAYYTYNDAQSLSDAFKAHDGDIAAVFATPFRHEVFEDQALAQLEFARTARKCCDETGALLVVDDVRAGFRVARDCSWTHLGIEPDLSCWGKCFANGYPISALLGSNKARDAARDIFVTGSFWFSAVPMAAAIETLRIIRETPYLETLIASGAALRAGLEAQSQRHGLELKQTGPAQMPQIFFADDPDFRIGYAWAAACLKGGVYVHPYHNMFLSAAHTVDDVTETLEATDRAFSAVLRDFASLQPHPILMQLAGA.

Lys-258 is subject to N6-(pyridoxal phosphate)lysine.

It belongs to the class-III pyridoxal-phosphate-dependent aminotransferase family. Requires pyridoxal 5'-phosphate as cofactor.

The protein resides in the cytoplasm. It catalyses the reaction (2S,3S,5R,10R,12S,14S,15R,16R)-2-amino-12,16-dimethylicosane-3,5,10,14,15-pentol + pyruvate = (3S,5R,10R,12S,14S,15R,16R)-3,5,10,14,15-pentahydroxy-12,16-dimethylicosan-2-one + L-alanine. Involved in degradation of fumonisin B1. Catalyzes the deamination of aminopentol (HFB1) to 2-keto-HFB1. Pyruvate is the preferred cosubstrate, but it can also use several other alpha-keto acids as amino group acceptors. In Sphingopyxis macrogoltabida (Sphingomonas macrogoltabidus), this protein is Aminopentol aminotransferase (fumI).